Here is a 768-residue protein sequence, read N- to C-terminus: Telomere repeats-binding bouquet formation protein 1 (768 aa).

ARM repeat units lie at residues 101–145 (ELFQ…REVG) and 341–384 (NGLP…GQNS). Positions 399 to 448 (ETLREHWKAAKEILCRIKQFEKGGKEEKQQNRSGHYKDNTPSMKVNIQTN) form a coiled coil. 2 stretches are compositionally biased toward basic and acidic residues: residues 422 to 436 (GKEE…HYKD) and 461 to 475 (RAED…ELRS). Disordered regions lie at residues 422 to 441 (GKEE…TPSM) and 454 to 475 (ADST…ELRS). An interaction with TERF1 region spans residues 524 to 700 (QNLDKEKTFD…EAMERRSPVP (177 aa)). T648 carries the phosphothreonine modification. Residues 707-760 (KKRRIRKDFTKEEVNYLFHGVKTMGNHWNSILWSFPFQKGRRAVDLAHKYHRLI) enclose the Myb-like domain.

It belongs to the TERB1 family. Component of the MAJIN-TERB1-TERB2 complex, composed of MAJIN, TERB1 and TERB2. Interacts with TERF1, STAG3 and SUN1. Interacts (via Myb-like domain) with the cohesin complex; probably mediated via interaction with STAG3. In terms of processing, phosphorylated by CDK. Phosphorylation by CDK takes place in late prophase when the cap exchange is prominent. is important for the stabilization of telomere attachment but dispenable for the cap exchange. Expressed in testis and fetal oocytes.

It localises to the chromosome. The protein resides in the telomere. Its subcellular location is the nucleus inner membrane. In terms of biological role, meiosis-specific telomere-associated protein involved in meiotic telomere attachment to the nucleus inner membrane, a crucial step for homologous pairing and synapsis. Component of the MAJIN-TERB1-TERB2 complex, which promotes telomere cap exchange by mediating attachment of telomeric DNA to the inner nuclear membrane and replacement of the protective cap of telomeric chromosomes: in early meiosis, the MAJIN-TERB1-TERB2 complex associates with telomeric DNA and the shelterin/telosome complex. During prophase, the complex matures and promotes release of the shelterin/telosome complex from telomeric DNA. In the MAJIN-TERB1-TERB2 complex, TERB1 probably mediates association with the shelterin/telosome complex via interaction with TERF1, promoting priming telomeric DNA attachment'. Promotes telomere association with the nuclear envelope and deposition of the SUN-KASH/LINC complex. Also recruits cohesin to telomeres to develop structural rigidity. This Mus musculus (Mouse) protein is Telomere repeats-binding bouquet formation protein 1.